Here is a 275-residue protein sequence, read N- to C-terminus: Integrase homolog (275 aa).

Basic and acidic residues predominate over residues 88–111 (RVSQDRQAQGRERRSVLLPQERRG). A disordered region spans residues 88-120 (RVSQDRQAQGRERRSVLLPQERRGSSGRQPLYS).

This sequence belongs to the 'phage' integrase family.

Integrase-recombinase proteins are responsible for catalyzing strand exchange between DNA molecules and play an important role in the DNA replication. In terms of biological role, may be required for the formation of concatameric complex replicative intermediates and/or their resolution before encapsidation. This Dryophytes versicolor (chameleon treefrog) protein is Integrase homolog (INT).